We begin with the raw amino-acid sequence, 353 residues long: GDSL esterase/lipase APG (353 aa).

The first 25 residues, 1–25 (MDRCTSSFLLLTLVSTLSILQISFA), serve as a signal peptide directing secretion. Serine 37 acts as the Nucleophile in catalysis. N-linked (GlcNAc...) asparagine glycans are attached at residues asparagine 197 and asparagine 320. Active-site residues include aspartate 328 and histidine 331.

Belongs to the 'GDSL' lipolytic enzyme family.

The protein resides in the secreted. This chain is GDSL esterase/lipase APG (APG), found in Arabidopsis thaliana (Mouse-ear cress).